Consider the following 129-residue polypeptide: UPF0102 protein CT2262 (129 aa).

This sequence belongs to the UPF0102 family.

This Chlorobaculum tepidum (strain ATCC 49652 / DSM 12025 / NBRC 103806 / TLS) (Chlorobium tepidum) protein is UPF0102 protein CT2262.